We begin with the raw amino-acid sequence, 364 residues long: F-box/LRR-repeat protein At1g55660 (364 aa).

Residues 52–98 (MDKISQLPDELLVKVLSFLSTKDAVSTSILSMRWKSLWMWLPKLEYN) enclose the F-box domain. LRR repeat units lie at residues 158 to 179 (NVRE…LPKS), 185 to 206 (SIVI…VCLP), 207 to 228 (SLKT…HRLL), 233 to 254 (VLED…SVIV), 256 to 277 (SLQR…KMNS), and 279 to 300 (SLKY…ESDS).

In Arabidopsis thaliana (Mouse-ear cress), this protein is F-box/LRR-repeat protein At1g55660.